The sequence spans 329 residues: MQGSVTEFLKPRLVDIEQVSSTHAKVTLEPLERGFGHTLGNALRRILLSSMPGCAVTEVEIDGVLHEYSTKEGVQEDILEILLNLKGLAVRVQGKDEVILTLNKSGIGPVTAADIIHDGDVEIVKPQHLICHLTDENASISMRIKVQRGRGYVPASARIHTEEDERPIGRLLVDACYSPVERIAYNVEAARVEQRTDLDKLVIEMETNGTIDPEEAIRRAATILAEQLEAFVDLRDVRQPEVKEEKPEFDPILLRPVDDLELTVRSANCLKAEAIHYIGDLVQRTEVELLKTPNLGKKSLTEIKDVLASRGLSLGMRLENWPPASIADE.

Positions 1–235 (MQGSVTEFLK…EQLEAFVDLR (235 aa)) are alpha N-terminal domain (alpha-NTD). Residues 249–329 (FDPILLRPVD…NWPPASIADE (81 aa)) form an alpha C-terminal domain (alpha-CTD) region.

Belongs to the RNA polymerase alpha chain family. Homodimer. The RNAP catalytic core consists of 2 alpha, 1 beta, 1 beta' and 1 omega subunit. When a sigma factor is associated with the core the holoenzyme is formed, which can initiate transcription.

It carries out the reaction RNA(n) + a ribonucleoside 5'-triphosphate = RNA(n+1) + diphosphate. In terms of biological role, DNA-dependent RNA polymerase catalyzes the transcription of DNA into RNA using the four ribonucleoside triphosphates as substrates. This Pectobacterium atrosepticum (strain SCRI 1043 / ATCC BAA-672) (Erwinia carotovora subsp. atroseptica) protein is DNA-directed RNA polymerase subunit alpha.